The following is a 185-amino-acid chain: Probable chorismate pyruvate-lyase (185 aa).

Residues Arg84, Leu122, and Glu178 each coordinate substrate.

Belongs to the UbiC family.

Its subcellular location is the cytoplasm. The enzyme catalyses chorismate = 4-hydroxybenzoate + pyruvate. The protein operates within cofactor biosynthesis; ubiquinone biosynthesis. Its function is as follows. Removes the pyruvyl group from chorismate, with concomitant aromatization of the ring, to provide 4-hydroxybenzoate (4HB) for the ubiquinone pathway. This Hydrogenovibrio crunogenus (strain DSM 25203 / XCL-2) (Thiomicrospira crunogena) protein is Probable chorismate pyruvate-lyase.